Reading from the N-terminus, the 131-residue chain is Keratin, high-sulfur matrix protein, IIIA3 (131 aa).

As to expression, wool.

Functionally, the keratin products of mammalian epidermal derivatives such as wool and hair consist of microfibrils embedded in a rigid matrix of other proteins. The matrix proteins include the high-sulfur and high-tyrosine keratins, having molecular weights of 6-20 kDa, whereas the microfibrils contain the larger, low-sulfur keratins (40-56 kDa). The sequence is that of Keratin, high-sulfur matrix protein, IIIA3 from Ovis aries (Sheep).